A 433-amino-acid chain; its full sequence is D-amino acid dehydrogenase (433 aa).

Residue 3-17 (VLVLGSGVIGTTSAY) participates in FAD binding.

It belongs to the DadA oxidoreductase family. Requires FAD as cofactor.

It carries out the reaction a D-alpha-amino acid + A + H2O = a 2-oxocarboxylate + AH2 + NH4(+). Its pathway is amino-acid degradation; D-alanine degradation; NH(3) and pyruvate from D-alanine: step 1/1. Oxidative deamination of D-amino acids. The chain is D-amino acid dehydrogenase from Pseudomonas savastanoi pv. phaseolicola (strain 1448A / Race 6) (Pseudomonas syringae pv. phaseolicola (strain 1448A / Race 6)).